The following is a 227-amino-acid chain: LexA repressor (227 aa).

Positions 26-46 form a DNA-binding region, H-T-H motif; the sequence is FDEMKEALDLASKSGIHRLIT. Active-site for autocatalytic cleavage activity residues include serine 147 and lysine 185.

Belongs to the peptidase S24 family. Homodimer.

It carries out the reaction Hydrolysis of Ala-|-Gly bond in repressor LexA.. Represses a number of genes involved in the response to DNA damage (SOS response), including recA and lexA. In the presence of single-stranded DNA, RecA interacts with LexA causing an autocatalytic cleavage which disrupts the DNA-binding part of LexA, leading to derepression of the SOS regulon and eventually DNA repair. In Hyphomonas neptunium (strain ATCC 15444), this protein is LexA repressor.